The sequence spans 375 residues: MATVCVVGSGILGLAVASCLLEKTNVNIVIISDDFPHESSHDLKYSPFFTSPWAGAHFRPFPSVTEFDQRHVEYTRATYGHFKKLAAFEPQEETSIRFLEGTDLVERGHPNFEYYSELKQGYREEIEDFVVNDWEHGFSASYKTWVLNAPFFLSYLFKKLRSNPRVTLKQGKLNTLREAFTENAAKNDQSPDLGANGYNYVFNCTGLGLQMNGGWDPACYVIRGQTLLLKVPSGPHLQKTVTHQSKEGQWTFFIPRPLSNPESPTEDYVILGGTKQEKDFDSGSPRSQDSLDILTRADRLFPELKDAKTGHFQVIQPNVGFRPSRKGGVRVEREKVPDVENSFAYHCYGAGGMGYELSFGVAFAVVDLFLDDYNQ.

Residues 1–17 (MATVCVVGSGILGLAVA) form the signal peptide. FAD is bound by residues S9, L12, D34, S51, and G55. N-linked (GlcNAc...) asparagine glycosylation is present at N203. R322, G354, and Y355 together coordinate FAD.

This sequence belongs to the DAMOX/DASOX family. The cofactor is FAD.

It carries out the reaction D-aspartate + O2 + H2O = oxaloacetate + H2O2 + NH4(+). It catalyses the reaction D-glutamate + O2 + H2O = H2O2 + 2-oxoglutarate + NH4(+). Functionally, selectively catalyzes the oxidative deamination of acidic amino acids. Protects the organism from the toxicity of D-amino acids. Enables the organism to utilize D-amino acids as a source of nutrients. Enables the organism to utilize D-aspartate as a nitrogen source. This chain is D-aspartate oxidase (DDO), found in Komagataella phaffii (strain GS115 / ATCC 20864) (Yeast).